A 173-amino-acid chain; its full sequence is 16S rRNA aminocarboxypropyltransferase (173 aa).

Residues T25, L72, L96, and S115 each contribute to the S-adenosyl-L-methionine site.

The protein belongs to the TDD superfamily. TSR3 family.

It is found in the cytoplasm. The enzyme catalyses an N(1)-methylpseudouridine in rRNA + S-adenosyl-L-methionine = N(1)-methyl-N(3)-[(3S)-3-amino-3-carboxypropyl]pseudouridine in rRNA + S-methyl-5'-thioadenosine + H(+). Functionally, aminocarboxypropyltransferase that catalyzes the aminocarboxypropyl transfer on pseudouridine corresponding to position 914 in M.jannaschii 16S rRNA. It constitutes the last step in biosynthesis of the hypermodified N1-methyl-N3-(3-amino-3-carboxypropyl) pseudouridine (m1acp3-Psi). The protein is 16S rRNA aminocarboxypropyltransferase of Methanosarcina mazei (strain ATCC BAA-159 / DSM 3647 / Goe1 / Go1 / JCM 11833 / OCM 88) (Methanosarcina frisia).